We begin with the raw amino-acid sequence, 529 residues long: Peptide chain release factor 3 (529 aa).

The region spanning 11–280 (SKRRTFAIIS…GLTEWAPAPK (270 aa)) is the tr-type G domain. GTP is bound by residues 20 to 27 (SHPDAGKT), 88 to 92 (DTPGH), and 142 to 145 (NKLD).

The protein belongs to the TRAFAC class translation factor GTPase superfamily. Classic translation factor GTPase family. PrfC subfamily.

Its subcellular location is the cytoplasm. Its function is as follows. Increases the formation of ribosomal termination complexes and stimulates activities of RF-1 and RF-2. It binds guanine nucleotides and has strong preference for UGA stop codons. It may interact directly with the ribosome. The stimulation of RF-1 and RF-2 is significantly reduced by GTP and GDP, but not by GMP. In Vibrio campbellii (strain ATCC BAA-1116), this protein is Peptide chain release factor 3.